The sequence spans 134 residues: MPVTAQQVELIPLAIYTLFAVGLIGILLLAARYLGSGKETSEKHIPFESGMVPTGNARHASQVPFYLIAIFFIVFDVEGAFILAWATSWDLLGIPGLVHITLFITVLLLGLVWLWMKGGLDWGPSAMRARGKRS.

3 helical membrane passes run 10-30 (LIPLAIYTLFAVGLIGILLLA), 65-85 (FYLIAIFFIVFDVEGAFILAW), and 94-114 (IPGLVHITLFITVLLLGLVWL).

This sequence belongs to the complex I subunit 3 family. In terms of assembly, NDH-1 is composed of 14 different subunits. Subunits NuoA, H, J, K, L, M, N constitute the membrane sector of the complex.

It localises to the cell inner membrane. It catalyses the reaction a quinone + NADH + 5 H(+)(in) = a quinol + NAD(+) + 4 H(+)(out). Its function is as follows. NDH-1 shuttles electrons from NADH, via FMN and iron-sulfur (Fe-S) centers, to quinones in the respiratory chain. The immediate electron acceptor for the enzyme in this species is believed to be ubiquinone. Couples the redox reaction to proton translocation (for every two electrons transferred, four hydrogen ions are translocated across the cytoplasmic membrane), and thus conserves the redox energy in a proton gradient. The chain is NADH-quinone oxidoreductase subunit A 1 from Citrifermentans bemidjiense (strain ATCC BAA-1014 / DSM 16622 / JCM 12645 / Bem) (Geobacter bemidjiensis).